Consider the following 400-residue polypeptide: Queuine tRNA-ribosyltransferase (400 aa).

Asp-93 acts as the Proton acceptor in catalysis. Substrate is bound by residues 93–97 (DSGGF), Asp-147, Gln-190, and Gly-217. An RNA binding region spans residues 248–254 (GVGSPED). The active-site Nucleophile is Asp-267. The interval 272–276 (TRIAR) is RNA binding; important for wobble base 34 recognition. Residues Cys-305, Cys-307, Cys-310, and His-336 each contribute to the Zn(2+) site. The interval 375–400 (RRERARAAGGAGHAPGPAEPLLPENR) is disordered. The segment covering 388-400 (APGPAEPLLPENR) has biased composition (low complexity).

Belongs to the queuine tRNA-ribosyltransferase family. In terms of assembly, homodimer. Within each dimer, one monomer is responsible for RNA recognition and catalysis, while the other monomer binds to the replacement base PreQ1. It depends on Zn(2+) as a cofactor.

It carries out the reaction 7-aminomethyl-7-carbaguanine + guanosine(34) in tRNA = 7-aminomethyl-7-carbaguanosine(34) in tRNA + guanine. It participates in tRNA modification; tRNA-queuosine biosynthesis. Catalyzes the base-exchange of a guanine (G) residue with the queuine precursor 7-aminomethyl-7-deazaguanine (PreQ1) at position 34 (anticodon wobble position) in tRNAs with GU(N) anticodons (tRNA-Asp, -Asn, -His and -Tyr). Catalysis occurs through a double-displacement mechanism. The nucleophile active site attacks the C1' of nucleotide 34 to detach the guanine base from the RNA, forming a covalent enzyme-RNA intermediate. The proton acceptor active site deprotonates the incoming PreQ1, allowing a nucleophilic attack on the C1' of the ribose to form the product. After dissociation, two additional enzymatic reactions on the tRNA convert PreQ1 to queuine (Q), resulting in the hypermodified nucleoside queuosine (7-(((4,5-cis-dihydroxy-2-cyclopenten-1-yl)amino)methyl)-7-deazaguanosine). The sequence is that of Queuine tRNA-ribosyltransferase from Symbiobacterium thermophilum (strain DSM 24528 / JCM 14929 / IAM 14863 / T).